We begin with the raw amino-acid sequence, 269 residues long: Nuclear egress protein 2 (269 aa).

Residues 1-247 are Perinuclear space-facing; that stretch reads MSRRTYVRSE…VWKLALPVAN (247 aa). Residues 248 to 268 form a helical membrane-spanning segment; the sequence is VTYALFIVIVLVVVLGAVLFW. Lys269 is a topological domain (nuclear).

Belongs to the herpesviridae NEC2 protein family. As to quaternary structure, forms a heterohexameric complex with NEC1. Post-translationally, phosphorylated.

Its subcellular location is the host nucleus inner membrane. Its function is as follows. Plays an essential role in virion nuclear egress, the first step of virion release from infected cell. Within the host nucleus, NEC1 interacts with the newly formed capsid through the vertexes and directs it to the inner nuclear membrane by associating with NEC2. Induces the budding of the capsid at the inner nuclear membrane as well as its envelopment into the perinuclear space. There, the NEC1/NEC2 complex promotes the fusion of the enveloped capsid with the outer nuclear membrane and the subsequent release of the viral capsid into the cytoplasm where it will reach the secondary budding sites in the host Golgi or trans-Golgi network. The sequence is that of Nuclear egress protein 2 from Homo sapiens (Human).